The chain runs to 200 residues: COMM domain-containing protein 7 (200 aa).

The COMM domain maps to 133–200; sequence QLIDMEWRFG…RVRASMECLS (68 aa).

Belongs to the COMM domain-containing protein 7 family. As to quaternary structure, component of the commander complex consisting of the CCC subcomplex and the retriever subcomplex. Component of the CCC (COMMD/CCDC22/CCDC93) subcomplex consisting of COMMD1, COMMD2, COMMD3, COMMD4, COMMD5, COMMD6, COMMD7, COMMD8, COMMD9, COMMD10, CCDC22 and CCDC93; within the complex forms a heterodimer with COMMD9. Interacts with RELA. Interacts with CCDC22, CCDC93, SCNN1B, CUL7.

Its subcellular location is the cytoplasmic vesicle. Scaffold protein in the commander complex that is essential for endosomal recycling of transmembrane cargos; the commander complex is composed of the CCC subcomplex and the retriever subcomplex. May modulate activity of cullin-RING E3 ubiquitin ligase (CRL) complexes. Associates with the NF-kappa-B complex and suppresses its transcriptional activity. This chain is COMM domain-containing protein 7 (Commd7), found in Mus musculus (Mouse).